A 430-amino-acid chain; its full sequence is MSDAASPAGSPAAEPTEHRDEDQVNETHQDDGSNHGGNDEDNDGGNDKDSDVLSEIDENEFGDDYGSRPVDIDENVAMKLKARRKTTTETTKKPKEGRRPKKRSRGDDDVDAADDDGERRPRKVRAEGERRARKEVEEQQAQQEENLTPDERRRRALERAIDAAVKNPTKRRRKKDDIDLEEETDEQIANLKVAMEKACVADNEAREQKQPAVHKLKLLPQVTAILNRTAIQDSVLDPEINFLQSVRYFLEPLNDGSLPAYNIQRAIMSALMKLPINKDVLLSSGIGKVVVYYNKSKSPSADIKRDAERLLGEWSRLILKRTDDYKKRHIEMREIDVGAVKLGQREGGSSQVTLTQRPAGKSRYEIERERALAPEVRNNNRARPVGLPASYTIAPKSTYIPGQAPTDHRPIGHSGHEAFRRMTQKGKGKR.

The span at 1-14 (MSDAASPAGSPAAE) shows a compositional bias: low complexity. The tract at residues 1-153 (MSDAASPAGS…EENLTPDERR (153 aa)) is disordered. Basic and acidic residues predominate over residues 15–33 (PTEHRDEDQVNETHQDDGS). The span at 52–63 (VLSEIDENEFGD) shows a compositional bias: acidic residues. The span at 95–104 (KEGRRPKKRS) shows a compositional bias: basic residues. Residues 124-137 (VRAEGERRARKEVE) are compositionally biased toward basic and acidic residues. Residues 244-321 (QSVRYFLEPL…GEWSRLILKR (78 aa)) enclose the TFIIS N-terminal domain. Residues 402–430 (GQAPTDHRPIGHSGHEAFRRMTQKGKGKR) are disordered. The span at 406-420 (TDHRPIGHSGHEAFR) shows a compositional bias: basic and acidic residues.

The protein belongs to the IWS1 family.

Its subcellular location is the nucleus. Its function is as follows. Transcription factor involved in RNA polymerase II transcription regulation. May function in both SPT15/TBP post-recruitment and recruitment steps of transcription. This Neurospora crassa (strain ATCC 24698 / 74-OR23-1A / CBS 708.71 / DSM 1257 / FGSC 987) protein is Transcription factor iws-1 (iws-1).